Here is a 1584-residue protein sequence, read N- to C-terminus: Adhesion G protein-coupled receptor B1 (1584 aa).

Residues 1-30 (MRGQAAAPGPVWILAPLLLLLLLLGRRARA) form the signal peptide. Topologically, residues 31–948 (AAGADAGPGP…ANMEKATLPS (918 aa)) are extracellular. N-linked (GlcNAc...) asparagine glycosylation occurs at N64. Residues 146 to 167 (RRQQPPQHDGLRPRAGPPGPTD) are disordered. The region spanning 261-315 (TGGWKLWSLWGECTRDCGGGLQTRTRTCLPAPGVEGGGCEGVLEEGRQCNREACG) is the TSP type-1 1 domain. Intrachain disulfides connect C273–C309, C277–C314, and C288–C299. Positions 313–335 (ACGPAGRTSSRSQSLRSTDARRR) are disordered. Positions 319–329 (RTSSRSQSLRS) are enriched in low complexity. TSP type-1 domains are found at residues 354-407 (DPAA…AVCP), 409-462 (HGAW…ALCP), 467-520 (DGNW…QQCP), and 522-575 (DGKW…QRCP). 14 disulfide bridges follow: C366-C400, C370-C406, C381-C390, C421-C456, C425-C461, C436-C446, C479-C514, C483-C519, C494-C504, C534-C569, C538-C574, C549-C559, C581-C616, and C604-C634. Residue N401 is glycosylated (N-linked (GlcNAc...) asparagine). An N-linked (GlcNAc...) asparagine glycan is attached at N607. T609 bears the Phosphothreonine mark. N-linked (GlcNAc...) asparagine glycans are attached at residues N692, N844, N877, and N881. A GAIN-B domain is found at 760–939 (RDAYQVTDNL…AILAQLSADA (180 aa)). Intrachain disulfides connect C884-C921 and C909-C923. Residues 884–939 (CILWDETDVPSSSAPPQLGPWSWRGCRTVPLDALRTRCLCDRLSTFAILAQLSADA) form a GPS region. Positions 927–943 (STFAILAQLSADANMEK) are N-terminal stalk following vasculostatin-120 cleavage which is not required for signaling activity. Residues 949–969 (VTLIVGCGVSSLTLLMLVIIY) traverse the membrane as a helical segment. Over 970–980 (VSVWRYIRSER) the chain is Cytoplasmic. The helical transmembrane segment at 981 to 1001 (SVILINFCLSIISSNALILIG) threads the bilayer. Topologically, residues 1002–1008 (QTQTRNK) are extracellular. A helical transmembrane segment spans residues 1009–1029 (VVCTLVAAFLHFFFLSSFCWV). At 1030 to 1052 (LTEAWQSYMAVTGHLRNRLIRKR) the chain is on the cytoplasmic side. Residues 1053-1073 (FLCLGWGLPALVVAISVGFTK) form a helical membrane-spanning segment. The Extracellular segment spans residues 1074–1093 (AKGYSTMNYCWLSLEGGLLY). Residues 1094–1114 (AFVGPAAAVVLVNMVIGILVF) traverse the membrane as a helical segment. Residues 1115–1136 (NKLVSKDGITDKKLKERAGASL) are Cytoplasmic-facing. A helical transmembrane segment spans residues 1137-1157 (WSSCVVLPLLALTWMSAVLAV). Residues 1158 to 1166 (TDRRSALFQ) are Extracellular-facing. Residues 1167–1187 (ILFAVFDSLEGFVIVMVHCIL) traverse the membrane as a helical segment. At 1188–1584 (RREVQDAVKC…QDIIDLQTEV (397 aa)) the chain is on the cytoplasmic side. Positions 1365–1584 (YSIHIDQMPQ…QDIIDLQTEV (220 aa)) are involved in interaction with MAGI1. Disordered regions lie at residues 1385 to 1475 (EASL…RRKS) and 1501 to 1548 (RKLQ…KKEL). Pro residues predominate over residues 1391 to 1439 (RSPPSRQPPSGGPPEAPPAQPPPPPPPPPPPPQQPLPPPPNLEPAPPSL). Polar residues predominate over residues 1453–1469 (TGPSTKNENVATLSVSS). The residue at position 1469 (S1469) is a Phosphoserine. A compositionally biased stretch (basic and acidic residues) spans 1501-1522 (RKLQHAAEKDKEVLGPDSKPEK). The interval 1581–1584 (QTEV) is indispensable for interaction with MAGI1.

Belongs to the G-protein coupled receptor 2 family. LN-TM7 subfamily. Interacts with ELMO1 and DOCK. When bound to ELMO1 and DOCK1, acts as a module to promote apoptotic cell engulfment. Interacts with MDM2; the interaction results in inhibition of MDM2-mediated ubiquitination and degradation of DLG4/PSD95. Interacts with PARD3 and TIAM1; the interaction is required for correct dendritic. localization of PARD3 and TIAM1 and for dendritic spine formation. Interacts with MAGI1. Interacts with MAGI3. Interacts with BAIAP2. Interacts with PHYHIP. Interacts with DLG4 (via PDZ domain). Vasculostatin-120: Interacts with CD36. Vasculostatin-120: Interacts with ARRB2. Interacts with BAIAP3; this interaction is direct. Post-translationally, proteolytically cleaved to produce vasculostatin-40 and vasculostatin-120. Vasculostatin-40 is the major form and is produced through proteolytic cleavage by MMP14 between residues 321 and 329 with cleavage likely to be between Ser-326 and Leu-327. Ubiquitinated. In terms of tissue distribution, expressed in brain (at protein level). Expressed on mononuclear phagocytes and monocyte-derived macrophages in the gastric mucosa (at protein level). Expressed in normal pancreatic tissue but not in pancreatic tumor tissue. Reduced or no expression is observed in some glioblastomas.

It is found in the cell membrane. It localises to the cell projection. Its subcellular location is the phagocytic cup. The protein localises to the cell junction. The protein resides in the focal adhesion. It is found in the dendritic spine. It localises to the postsynaptic density. Its subcellular location is the secreted. Its function is as follows. Phosphatidylserine receptor which enhances the engulfment of apoptotic cells. Also mediates the binding and engulfment of Gram-negative bacteria. Stimulates production of reactive oxygen species by macrophages in response to Gram-negative bacteria, resulting in enhanced microbicidal macrophage activity. In the gastric mucosa, required for recognition and engulfment of apoptotic gastric epithelial cells. Promotes myoblast fusion. Activates the Rho pathway in a G-protein-dependent manner. Inhibits MDM2-mediated ubiquitination and degradation of DLG4/PSD95, promoting DLG4 stability and regulating synaptic plasticity. Required for the formation of dendritic spines by ensuring the correct localization of PARD3 and TIAM1. Potent inhibitor of angiogenesis in brain and may play a significant role as a mediator of the p53/TP53 signal in suppression of glioblastoma. Inhibits angiogenesis in a CD36-dependent manner. In terms of biological role, inhibits angiogenesis. This is Adhesion G protein-coupled receptor B1 from Homo sapiens (Human).